A 332-amino-acid chain; its full sequence is Aquaporin-7-2 (332 aa).

Positions 1–40 are enriched in polar residues; the sequence is MSGQHQITEQPSGNPLSRTSTLIQEKPLTPTSSHAGTQKQ. A disordered region spans residues 1 to 46; sequence MSGQHQITEQPSGNPLSRTSTLIQEKPLTPTSSHAGTQKQPEAPRQ. The Cytoplasmic portion of the chain corresponds to 1–66; it reads MSGQHQITEQ…RHAIRKPMAE (66 aa). A helical membrane pass occupies residues 67–87; sequence FFGVALLIIFGAGSACQVVLS. Over 88 to 100 the chain is Extracellular; the sequence is TNPDVASSARGSF. A helical transmembrane segment spans residues 101 to 121; sequence LSINFGWAIGIAMGVWVSGGI. Residues 122-144 are Cytoplasmic-facing; sequence SGGHINPAITIAMATYRGFPWCK. Residues 127–129 carry the NPA 1 motif; the sequence is NPA. The helical transmembrane segment at 145–165 threads the bilayer; sequence VPSYILAQVLGGVVGAALVYA. Residues 166–199 lie on the Extracellular side of the membrane; that stretch reads NYIHAIDVFEGGHHIRTEATASLFATYALPYMTQ. A helical membrane pass occupies residues 200-220; the sequence is ASCFFSEFLATAVLSMMVFAL. Over 221–230 the chain is Cytoplasmic; sequence TDKRNHSPTN. Residues 231-251 traverse the membrane as a helical segment; that stretch reads GLLPFALFILFVGLGASLGME. The Extracellular segment spans residues 252–283; it reads TAYALNPARDFGPRLFLAMAGYGKALFNYRSQ. Residues 257–259 carry the NPA 2 motif; the sequence is NPA. Residues 284 to 304 form a helical membrane-spanning segment; sequence YWLWAPIIAPVLGAQAGGLLY. The Cytoplasmic portion of the chain corresponds to 305 to 332; sequence DTFLNDGDNSPIKWRCASSQEQQLAEVV.

The protein belongs to the MIP/aquaporin (TC 1.A.8) family.

It is found in the membrane. It carries out the reaction H2O(in) = H2O(out). Its function is as follows. Water channel required to facilitate the transport of water across membranes. Does not mediate the transport carbon dioxide across the membrane. The sequence is that of Aquaporin-7-2 from Laccaria bicolor (Bicoloured deceiver).